The sequence spans 498 residues: ATP synthase subunit beta, chloroplastic (498 aa).

An ATP-binding site is contributed by 172–179; that stretch reads GGAGVGKT.

This sequence belongs to the ATPase alpha/beta chains family. In terms of assembly, F-type ATPases have 2 components, CF(1) - the catalytic core - and CF(0) - the membrane proton channel. CF(1) has five subunits: alpha(3), beta(3), gamma(1), delta(1), epsilon(1). CF(0) has four main subunits: a(1), b(1), b'(1) and c(9-12).

It is found in the plastid. Its subcellular location is the chloroplast thylakoid membrane. The enzyme catalyses ATP + H2O + 4 H(+)(in) = ADP + phosphate + 5 H(+)(out). Functionally, produces ATP from ADP in the presence of a proton gradient across the membrane. The catalytic sites are hosted primarily by the beta subunits. The protein is ATP synthase subunit beta, chloroplastic of Lactuca sativa (Garden lettuce).